The following is a 725-amino-acid chain: Eukaryotic translation initiation factor 3 subunit B (725 aa).

The 85-residue stretch at 46 to 130 folds into the RRM domain; the sequence is NCVFIAGIPV…HTFTARSFKD (85 aa). 6 WD repeats span residues 202 to 240, 242 to 280, 354 to 395, 462 to 504, 510 to 552, and 554 to 594; these read RANWTETVFTWSPHGSYLSTIHKQGIILWGGKDYARAHR, AHTNVQYIDFSPCETYLVTYAAPEESNSWGDCEKDSLRI, VNIE…SMQR, PLSE…HAPK, DAGV…AKRT, and VIEH…FTFQ.

Belongs to the eIF-3 subunit B family. Component of the eukaryotic translation initiation factor 3 (eIF-3) complex.

The protein resides in the cytoplasm. In terms of biological role, RNA-binding component of the eukaryotic translation initiation factor 3 (eIF-3) complex, which is involved in protein synthesis of a specialized repertoire of mRNAs and, together with other initiation factors, stimulates binding of mRNA and methionyl-tRNAi to the 40S ribosome. The eIF-3 complex specifically targets and initiates translation of a subset of mRNAs involved in cell proliferation. The polypeptide is Eukaryotic translation initiation factor 3 subunit B (Caenorhabditis elegans).